The primary structure comprises 171 residues: Adenine phosphoribosyltransferase (171 aa).

The protein belongs to the purine/pyrimidine phosphoribosyltransferase family. As to quaternary structure, homodimer.

It localises to the cytoplasm. It catalyses the reaction AMP + diphosphate = 5-phospho-alpha-D-ribose 1-diphosphate + adenine. Its pathway is purine metabolism; AMP biosynthesis via salvage pathway; AMP from adenine: step 1/1. In terms of biological role, catalyzes a salvage reaction resulting in the formation of AMP, that is energically less costly than de novo synthesis. This chain is Adenine phosphoribosyltransferase, found in Shouchella clausii (strain KSM-K16) (Alkalihalobacillus clausii).